The sequence spans 931 residues: Netrin receptor UNC5C (931 aa).

A signal peptide spans 1–40 (MRKGLRATAARCGLGLGYLLQMLVLPALALLSASGTGSAA). Residues 41-380 (QDDDFFHELP…APDSDDVALY (340 aa)) lie on the Extracellular side of the membrane. Residues 62–159 (PHFLIEPEEA…AGTTKSRKAY (98 aa)) enclose the Ig-like domain. Intrachain disulfides connect Cys83-Cys144, Cys95-Cys142, Cys188-Cys239, Cys272-Cys309, Cys276-Cys313, Cys287-Cys299, Cys328-Cys362, Cys332-Cys367, and Cys340-Cys352. The region spanning 161–256 (RIAYLRKTFE…KRKSTTATVI (96 aa)) is the Ig-like C2-type domain. N-linked (GlcNAc...) asparagine glycosylation occurs at Asn236. 2 consecutive TSP type-1 domains span residues 260–314 (NGGW…TLCP) and 316–368 (DGRW…GLCM). N-linked (GlcNAc...) asparagine glycosylation is present at Asn361. Residues 381–401 (VGIVIAVIVCLAISVVVALFV) form a helical membrane-spanning segment. The Cytoplasmic portion of the chain corresponds to 402–931 (YRKNHRDFES…VVSLAAEGQY (530 aa)). A required for netrin-mediated axon repulsion of neuronal growth cones region spans residues 402-931 (YRKNHRDFES…VVSLAAEGQY (530 aa)). A Phosphoserine modification is found at Ser502. In terms of domain architecture, ZU5 spans 530–673 (CTAFGSFNSL…LSTYALVGHS (144 aa)). At Tyr568 the chain carries Phosphotyrosine. An interaction with DCC region spans residues 694-712 (SLEYSIRVYCLDDTQDALK). In terms of domain architecture, Death spans 850–929 (QKLCSSLDAP…ETVVSLAAEG (80 aa)).

Belongs to the unc-5 family. As to quaternary structure, interacts with DCC (via cytoplasmic domain). Interacts (tyrosine phosphorylated form) with PTPN11. Interacts (via extracellular domain) with FLRT3 (via extracellular domain). Interacts (via Ig-like C2-type domain) with DSCAM (via extracellular domain). Interacts (via death domain) with DAPK1. Interacts (via cytoplasmic domain) with TUBB3; this interaction is decreased by NTN1/Netrin-1. Post-translationally, proteolytically cleaved by caspases during apoptosis. The cleavage does not take place when the receptor is associated with netrin ligand. Its cleavage by caspases is required to induce apoptosis. Phosphorylated on different cytoplasmic tyrosine residues. Phosphorylation of Tyr-568 leads to an interaction with PTPN11 phosphatase, suggesting that its activity is regulated by phosphorylation/dephosphorylation. Tyrosine phosphorylation is netrin-dependent. Mainly expressed in brain. Expressed in temporal lobe cortical neurons and in neurons of the hippocampal pyramidal layer. Also expressed in kidney. Not expressed in developing or adult lung.

It localises to the cell membrane. The protein localises to the cell surface. Its subcellular location is the synapse. It is found in the synaptosome. The protein resides in the cell projection. It localises to the axon. The protein localises to the dendrite. Its subcellular location is the growth cone. It is found in the lamellipodium. The protein resides in the filopodium. Its function is as follows. Receptor for netrin required for axon guidance. Mediates axon repulsion of neuronal growth cones in the developing nervous system upon ligand binding. NTN1/Netrin-1 binding might cause dissociation of UNC5C from polymerized TUBB3 in microtubules and thereby lead to increased microtubule dynamics and axon repulsion. Axon repulsion in growth cones may also be caused by its association with DCC that may trigger signaling for repulsion. Might also collaborate with DSCAM in NTN1-mediated axon repulsion independently of DCC. Also involved in corticospinal tract axon guidance independently of DCC. Involved in dorsal root ganglion axon projection towards the spinal cord. It also acts as a dependence receptor required for apoptosis induction when not associated with netrin ligand. The sequence is that of Netrin receptor UNC5C (UNC5C) from Homo sapiens (Human).